Consider the following 359-residue polypeptide: Homoserine O-acetyltransferase (359 aa).

Residues 49 to 332 (VLICHALTGS…QSSYGHDAFL (284 aa)) form the AB hydrolase-1 domain. S143 acts as the Nucleophile in catalysis. R212 contributes to the substrate binding site. Catalysis depends on residues D299 and H328. Position 329 (D329) interacts with substrate.

This sequence belongs to the AB hydrolase superfamily. MetX family. As to quaternary structure, homodimer.

The protein localises to the cytoplasm. It catalyses the reaction L-homoserine + acetyl-CoA = O-acetyl-L-homoserine + CoA. Its pathway is amino-acid biosynthesis; L-methionine biosynthesis via de novo pathway; O-acetyl-L-homoserine from L-homoserine: step 1/1. Transfers an acetyl group from acetyl-CoA to L-homoserine, forming acetyl-L-homoserine. This is Homoserine O-acetyltransferase from Trichormus variabilis (strain ATCC 29413 / PCC 7937) (Anabaena variabilis).